The sequence spans 120 residues: Large ribosomal subunit protein bL20 (120 aa).

It belongs to the bacterial ribosomal protein bL20 family.

Functionally, binds directly to 23S ribosomal RNA and is necessary for the in vitro assembly process of the 50S ribosomal subunit. It is not involved in the protein synthesizing functions of that subunit. This chain is Large ribosomal subunit protein bL20, found in Chlamydia abortus (strain DSM 27085 / S26/3) (Chlamydophila abortus).